The sequence spans 240 residues: ATP-dependent dethiobiotin synthetase BioD (240 aa).

Glutamate 12–valine 17 is a binding site for ATP. Threonine 16 is a binding site for Mg(2+). Residue lysine 37 is part of the active site. Serine 41 is a binding site for substrate. ATP-binding positions include aspartate 54, glutamate 115–glycine 118, asparagine 179–glutamine 180, and proline 207–isoleucine 209. Mg(2+) is bound by residues aspartate 54 and glutamate 115.

This sequence belongs to the dethiobiotin synthetase family. As to quaternary structure, homodimer. Mg(2+) is required as a cofactor.

Its subcellular location is the cytoplasm. It catalyses the reaction (7R,8S)-7,8-diammoniononanoate + CO2 + ATP = (4R,5S)-dethiobiotin + ADP + phosphate + 3 H(+). The protein operates within cofactor biosynthesis; biotin biosynthesis; biotin from 7,8-diaminononanoate: step 1/2. In terms of biological role, catalyzes a mechanistically unusual reaction, the ATP-dependent insertion of CO2 between the N7 and N8 nitrogen atoms of 7,8-diaminopelargonic acid (DAPA, also called 7,8-diammoniononanoate) to form a ureido ring. This chain is ATP-dependent dethiobiotin synthetase BioD, found in Clostridium acetobutylicum (strain ATCC 824 / DSM 792 / JCM 1419 / IAM 19013 / LMG 5710 / NBRC 13948 / NRRL B-527 / VKM B-1787 / 2291 / W).